We begin with the raw amino-acid sequence, 451 residues long: Phenolic glucoside malonyltransferase 2 (451 aa).

H165 (proton acceptor) is an active-site residue. An HXXXD motif motif is present at residues 165-169 (HAVLD). Malonyl-CoA is bound by residues H270 and 272–273 (ST). The Proton acceptor role is filled by D395. The short motif at 395-399 (DFGWG) is the DFGWG motif element.

This sequence belongs to the plant acyltransferase family. Phenolic glucoside malonyltransferase subfamily.

The catalysed reaction is a flavonol 7-O-beta-D-glucoside + malonyl-CoA = a flavonol 7-O-(6-O-malonyl-beta-D-glucoside) + CoA. Its function is as follows. Malonyltransferase acting on xenobiotic glucosides. Has activity toward 2-Naphthol glucoside (2NAG), 1-Naphthol glucoside (1NAG), kaempferol 7-O-glucoside, hydroxycoumarin glucosides and phenol-glucosides, but not toward kaempferol 3-O-glucoside or daidzin. Prefers phenol glucosides rather than naphtol glucosides. In vivo, seems to be involved in the malonylation of 4-methylumbelliferone glucoside or 4-nitrophenyl glucoside while PMAT1 would be involved in the malonylation of 2-Naphthol glucoside. The sequence is that of Phenolic glucoside malonyltransferase 2 (PMAT2) from Arabidopsis thaliana (Mouse-ear cress).